Consider the following 418-residue polypeptide: Gamma-glutamyl phosphate reductase (418 aa).

It belongs to the gamma-glutamyl phosphate reductase family.

The protein localises to the cytoplasm. The catalysed reaction is L-glutamate 5-semialdehyde + phosphate + NADP(+) = L-glutamyl 5-phosphate + NADPH + H(+). It functions in the pathway amino-acid biosynthesis; L-proline biosynthesis; L-glutamate 5-semialdehyde from L-glutamate: step 2/2. Its function is as follows. Catalyzes the NADPH-dependent reduction of L-glutamate 5-phosphate into L-glutamate 5-semialdehyde and phosphate. The product spontaneously undergoes cyclization to form 1-pyrroline-5-carboxylate. This chain is Gamma-glutamyl phosphate reductase, found in Marinobacter nauticus (strain ATCC 700491 / DSM 11845 / VT8) (Marinobacter aquaeolei).